Reading from the N-terminus, the 1239-residue chain is Potassium channel subfamily T member 1 (1239 aa).

Residues Met1–Val45 are disordered. Residues Met1–Ser93 are Cytoplasmic-facing. A helical membrane pass occupies residues Leu94 to Cys126. At Trp127–Arg153 the chain is on the extracellular side. 2 N-linked (GlcNAc...) asparagine glycosylation sites follow: Asn133 and Asn137. Residues Lys154–Leu178 form a helical membrane-spanning segment. Topologically, residues Ser179 to Ser192 are cytoplasmic. Residues Phe193–Phe208 traverse the membrane as a helical segment. At Trp209–Leu215 the chain is on the extracellular side. The chain crosses the membrane as a helical span at residues Phe216–Met233. Topologically, residues Ile234–Ser246 are cytoplasmic. The helical transmembrane segment at Ala247–Glu274 threads the bilayer. Over Arg275–Asn281 the chain is Extracellular. The segment at residues Leu282–Thr302 is an intramembrane region (pore-forming). Residues Val296 and Gly297 each coordinate K(+). Residues Pro303–Lys304 lie on the Extracellular side of the membrane. The chain crosses the membrane as a helical span at residues Ile305–Gln338. Over Lys339–Leu1239 the chain is Cytoplasmic. The region spanning Glu352 to Val488 is the RCK N-terminal 1 domain. Na(+) is bound by residues Leu513, His516, Ser538, and Asn540. Residues Gln658 to Pro689 form a disordered region. 2 residues coordinate Zn(2+): Cys758 and Cys759. Residues Arg761 and Lys764 each coordinate K(+). Na(+)-binding residues include Arg761 and Lys764. Positions 766 and 768 each coordinate Zn(2+). The K(+) site is built by Asn769, Tyr771, Tyr777, and Gly778. Tyr771 contacts Na(+). Phe779 serves as a coordination point for Na(+). In terms of domain architecture, RCK N-terminal 2 spans Asn781–Leu921. Positions 787, 818, 820, 842, and 865 each coordinate K(+). 2 disordered regions span residues Arg1053 to Val1081 and Thr1212 to Leu1239. A compositionally biased stretch (low complexity) spans Ser1213–Asn1230.

This sequence belongs to the potassium channel family. Calcium-activated (TC 1.A.1.3) subfamily. KCa4.1/KCNT1 sub-subfamily. As to quaternary structure, homotetramer; which constitutes the Na(+)-activated K(+) channel. Interacts with KCNT2; these heterodimer channels differ from the homomers in their unitary conductance, kinetic behavior, subcellular localization, and response to activation of protein kinase C. Interacts (via C-terminus) with FMR1; this interaction alters gating properties of KCNT1. Interacts with CRBN via its cytoplasmic C-terminus. Does not interact with KCNT2. Phosphorylated by protein kinase C. Phosphorylation of the C-terminal domain increases channel activity. As to expression, detected in brain and brainstem, in vestibular and oculomotor nuclei, the medial nucleus of the trapezoid in the auditory system, in olfactory bulb, red nucleus, and deep cerebellar nuclei. Detected in thalamus, substantia nigra, and amygdala (at protein level). Highly expressed in the brain and kidney.

It localises to the cell membrane. The catalysed reaction is K(+)(in) = K(+)(out). Its activity is regulated as follows. Activated by high intracellular Na(+) level. In addition to activation by Na(+), is cooperatively activated by intracellular Cl(-) levels. Activated upon stimulation of G-protein coupled receptors, such as CHRM1 and GRIA1. Functionally, sodium-activated K(+) channel. Acts as an important mediator of neuronal membrane excitability. Contributes to the delayed outward currents. Regulates neuronal bursting in sensory neurons. Contributes to synaptic development and plasticity. This chain is Potassium channel subfamily T member 1 (Kcnt1), found in Rattus norvegicus (Rat).